The chain runs to 287 residues: Chlorophyll a-b binding protein CP29.2, chloroplastic (287 aa).

A chloroplast-targeting transit peptide spans 1 to 31 (MAATSTAAAASSIMGTRVVSDISSNSSRFTA). Arg-32 is modified (N2-acetylarginine). Phosphothreonine is present on Thr-37. Chlorophyll b is bound at residue Trp-55. Phe-75 serves as a coordination point for chlorophyll a. Phosphothreonine occurs at positions 109 and 111. Chlorophyll a contacts are provided by Glu-137 and His-140. The helical transmembrane segment at 143–163 (WAMLATLGAITVEWLTGVTWQ) threads the bilayer. Leu-177 lines the chlorophyll a pocket. A helical membrane pass occupies residues 181–201 (LPFSISTLIWIEVLVIGYIEF). The chlorophyll b site is built by Glu-200 and Arg-203. Residues Glu-239, His-242, Arg-244, Gln-256, and His-271 each coordinate chlorophyll a. Residues 245-265 (LAMVGFLGFAVQAAATGKGPL) traverse the membrane as a helical segment.

It belongs to the light-harvesting chlorophyll a/b-binding (LHC) protein family. The LHC complex consists of chlorophyll a-b binding proteins. Requires Binds at least 14 chlorophylls (8 Chl-a and 6 Chl-b) and carotenoids such as lutein and neoxanthin. as cofactor. Photoregulated by reversible phosphorylation of its threonine residues.

It localises to the plastid. The protein localises to the chloroplast thylakoid membrane. Its function is as follows. The light-harvesting complex (LHC) functions as a light receptor, it captures and delivers excitation energy to photosystems with which it is closely associated. This chain is Chlorophyll a-b binding protein CP29.2, chloroplastic (LHCB4.2), found in Arabidopsis thaliana (Mouse-ear cress).